The chain runs to 556 residues: Genetic interactor of prohibitins 3, mitochondrial (556 aa).

Residues 1 to 21 constitute a mitochondrion transit peptide; sequence MLNLCHALRGVRQFSCSVIVK. The CP-type G domain maps to 113–305; the sequence is ESTLNDILNY…LFDLPGYSTS (193 aa).

The protein belongs to the TRAFAC class YlqF/YawG GTPase family. GEP3 subfamily.

The protein localises to the mitochondrion. In terms of biological role, interacts genetically with prohibitins and thus may be involved in the mitochondrial lipid metabolism. The protein is Genetic interactor of prohibitins 3, mitochondrial (GEP3) of Saccharomyces cerevisiae (strain AWRI1631) (Baker's yeast).